The following is a 544-amino-acid chain: CTP synthase (544 aa).

Residues 1–265 (MARFIFITGG…DEAVLSAFGI (265 aa)) form an amidoligase domain region. Ser-13 lines the CTP pocket. Ser-13 is a UTP binding site. 14–19 (SLGKGL) contributes to the ATP binding site. Tyr-54 lines the L-glutamine pocket. Asp-71 contacts ATP. Residues Asp-71 and Glu-139 each coordinate Mg(2+). Residues 146-148 (DIE), 186-191 (KTKPTQ), and Lys-222 contribute to the CTP site. UTP is bound by residues 186–191 (KTKPTQ) and Lys-222. Positions 291 to 543 (TIGVVGKYVG…IAAALQQSRL (253 aa)) constitute a Glutamine amidotransferase type-1 domain. Gly-355 contributes to the L-glutamine binding site. Cys-382 (nucleophile; for glutamine hydrolysis) is an active-site residue. L-glutamine-binding positions include 383-386 (LGMQ), Glu-406, and Arg-471. Catalysis depends on residues His-516 and Glu-518.

The protein belongs to the CTP synthase family. Homotetramer.

The catalysed reaction is UTP + L-glutamine + ATP + H2O = CTP + L-glutamate + ADP + phosphate + 2 H(+). It carries out the reaction L-glutamine + H2O = L-glutamate + NH4(+). It catalyses the reaction UTP + NH4(+) + ATP = CTP + ADP + phosphate + 2 H(+). The protein operates within pyrimidine metabolism; CTP biosynthesis via de novo pathway; CTP from UDP: step 2/2. Its activity is regulated as follows. Allosterically activated by GTP, when glutamine is the substrate; GTP has no effect on the reaction when ammonia is the substrate. The allosteric effector GTP functions by stabilizing the protein conformation that binds the tetrahedral intermediate(s) formed during glutamine hydrolysis. Inhibited by the product CTP, via allosteric rather than competitive inhibition. In terms of biological role, catalyzes the ATP-dependent amination of UTP to CTP with either L-glutamine or ammonia as the source of nitrogen. Regulates intracellular CTP levels through interactions with the four ribonucleotide triphosphates. The chain is CTP synthase from Rhizorhabdus wittichii (strain DSM 6014 / CCUG 31198 / JCM 15750 / NBRC 105917 / EY 4224 / RW1) (Sphingomonas wittichii).